We begin with the raw amino-acid sequence, 34 residues long: Photosystem II reaction center protein M (34 aa).

Residues 7 to 27 (GFVASLLFVLVPTVFLIILFI) traverse the membrane as a helical segment.

Belongs to the PsbM family. PSII is composed of 1 copy each of membrane proteins PsbA, PsbB, PsbC, PsbD, PsbE, PsbF, PsbH, PsbI, PsbJ, PsbK, PsbL, PsbM, PsbT, PsbX, PsbY, PsbZ, Psb30/Ycf12, peripheral proteins PsbO, CyanoQ (PsbQ), PsbU, PsbV and a large number of cofactors. It forms dimeric complexes.

It is found in the cellular thylakoid membrane. In terms of biological role, one of the components of the core complex of photosystem II (PSII). PSII is a light-driven water:plastoquinone oxidoreductase that uses light energy to abstract electrons from H(2)O, generating O(2) and a proton gradient subsequently used for ATP formation. It consists of a core antenna complex that captures photons, and an electron transfer chain that converts photonic excitation into a charge separation. This subunit is found at the monomer-monomer interface. This Synechococcus sp. (strain WH7803) protein is Photosystem II reaction center protein M.